Here is a 269-residue protein sequence, read N- to C-terminus: MEGCPRNREIGPKLLDLIPQGRKWYQEDKNNTDQEKKLELRLGPPGGDEEDHSAIKKKNTEIRNIKKETEDKSFHCFNGNHFSPSNKTTSVPHISQKRTAPGPVVGWPPVRSFRKNLASTSSSKLGNESSHGGQINKSDDGEKQVETKKEGMFVKINMDGVPIGRKVDLNAYNSYEQLSFVVDKLFRGLLAAQRDISDGQGEEKPIIGLLDGKGEFTLTYEDNEGDKMLVGDVPWQMFVSSVKRLRVIKSSEISSALTFGCSKQEKMMH.

A compositionally biased stretch (basic and acidic residues) spans 25–40 (YQEDKNNTDQEKKLEL). Disordered regions lie at residues 25–55 (YQED…HSAI) and 76–146 (CFNG…KQVE). The short motif at 38–42 (LELRL) is the EAR-like (transcriptional repression) element. 2 stretches are compositionally biased toward polar residues: residues 80–93 (NHFS…SVPH) and 117–136 (LAST…GQIN). The segment covering 137–146 (KSDDGEKQVE) has biased composition (basic and acidic residues). Residues 151 to 250 (GMFVKINMDG…SVKRLRVIKS (100 aa)) enclose the PB1 domain.

This sequence belongs to the Aux/IAA family. As to quaternary structure, homodimers and heterodimers. Interacts with phytochrome A. Interacts with TPL.

Its subcellular location is the nucleus. In terms of biological role, aux/IAA proteins are short-lived transcriptional factors that function as repressors of early auxin response genes at low auxin concentrations. Repression is thought to result from the interaction with auxin response factors (ARFs), proteins that bind to the auxin-responsive promoter element (AuxRE). Formation of heterodimers with ARF proteins may alter their ability to modulate early auxin response genes expression. The sequence is that of Auxin-responsive protein IAA26 (IAA26) from Arabidopsis thaliana (Mouse-ear cress).